Reading from the N-terminus, the 201-residue chain is Holliday junction branch migration complex subunit RuvA (201 aa).

The segment at 1-61 (MIEFVKGTID…EDAFSLYGFS (61 aa)) is domain I. The segment at 62-140 (TREEKALFTK…DVVPEMIDNL (79 aa)) is domain II. Residues 141–150 (FNHEARIEKQ) form a flexible linker region. The tract at residues 151–201 (EAETALDEALEALRVLGYAEKEIKKVLPHLKEETALSTDQYVKKALQKLLK) is domain III.

The protein belongs to the RuvA family. Homotetramer. Forms an RuvA(8)-RuvB(12)-Holliday junction (HJ) complex. HJ DNA is sandwiched between 2 RuvA tetramers; dsDNA enters through RuvA and exits via RuvB. An RuvB hexamer assembles on each DNA strand where it exits the tetramer. Each RuvB hexamer is contacted by two RuvA subunits (via domain III) on 2 adjacent RuvB subunits; this complex drives branch migration. In the full resolvosome a probable DNA-RuvA(4)-RuvB(12)-RuvC(2) complex forms which resolves the HJ.

The protein localises to the cytoplasm. Functionally, the RuvA-RuvB-RuvC complex processes Holliday junction (HJ) DNA during genetic recombination and DNA repair, while the RuvA-RuvB complex plays an important role in the rescue of blocked DNA replication forks via replication fork reversal (RFR). RuvA specifically binds to HJ cruciform DNA, conferring on it an open structure. The RuvB hexamer acts as an ATP-dependent pump, pulling dsDNA into and through the RuvAB complex. HJ branch migration allows RuvC to scan DNA until it finds its consensus sequence, where it cleaves and resolves the cruciform DNA. The sequence is that of Holliday junction branch migration complex subunit RuvA from Bacillus velezensis (strain DSM 23117 / BGSC 10A6 / LMG 26770 / FZB42) (Bacillus amyloliquefaciens subsp. plantarum).